Reading from the N-terminus, the 31-residue chain is GVIPCGESCVFIPCISTLLGCSCKNKVCYRN.

Positions 1 to 31 (GVIPCGESCVFIPCISTLLGCSCKNKVCYRN) form a cross-link, cyclopeptide (Gly-Asn). Intrachain disulfides connect cysteine 5–cysteine 21, cysteine 9–cysteine 23, and cysteine 14–cysteine 28.

Post-translationally, this is a cyclic peptide.

Its function is as follows. Probably participates in a plant defense mechanism. Has antibiotic activity. Inhibits the cytopathic effects and replication of the human immunodeficiency virus. Active against both Gram-positive and Gram-negative bacteria. This is Circulin-B from Chassalia parviflora.